Here is a 206-residue protein sequence, read N- to C-terminus: Guanylate kinase (206 aa).

The 179-residue stretch at 5–183 folds into the Guanylate kinase-like domain; that stretch reads FNLLILSGPS…SKEIILSIAK (179 aa). ATP is bound at residue 12 to 19; sequence GPSGAGKS.

The protein belongs to the guanylate kinase family.

The protein localises to the cytoplasm. It catalyses the reaction GMP + ATP = GDP + ADP. Its function is as follows. Essential for recycling GMP and indirectly, cGMP. The protein is Guanylate kinase of Helicobacter pylori (strain HPAG1).